The following is a 266-amino-acid chain: Vitamin B12-binding protein (266 aa).

The signal sequence occupies residues 1–22 (MAKSLFRALVALSFLAPLWLNA). One can recognise a Fe/B12 periplasmic-binding domain in the interval 25–266 (RVITLSPANT…QLCNALSQVD (242 aa)). Cyanocob(III)alamin-binding positions include tyrosine 50 and 242 to 246 (DWFER). Cysteine 183 and cysteine 259 are disulfide-bonded.

It belongs to the BtuF family. The complex is composed of two ATP-binding proteins (BtuD), two transmembrane proteins (BtuC) and a solute-binding protein (BtuF).

It is found in the periplasm. Part of the ABC transporter complex BtuCDF involved in vitamin B12 import. Binds vitamin B12 and delivers it to the periplasmic surface of BtuC. The polypeptide is Vitamin B12-binding protein (Escherichia coli O6:H1 (strain CFT073 / ATCC 700928 / UPEC)).